A 170-amino-acid chain; its full sequence is Regulator of ribonuclease activity A (170 aa).

It belongs to the RraA family. In terms of assembly, homotrimer. Binds to both RNA-binding sites in the C-terminal region of Rne and to RhlB.

The protein resides in the cytoplasm. Functionally, globally modulates RNA abundance by binding to RNase E (Rne) and regulating its endonucleolytic activity. Can modulate Rne action in a substrate-dependent manner by altering the composition of the degradosome. Modulates RNA-binding and helicase activities of the degradosome. This Psychromonas ingrahamii (strain DSM 17664 / CCUG 51855 / 37) protein is Regulator of ribonuclease activity A.